The sequence spans 129 residues: Large ribosomal subunit protein bL12 (129 aa).

Over residues 95–123 (MVESTPKSIKEGVSKEDAEEAKKSLEDAG) the composition is skewed to basic and acidic residues. The disordered stretch occupies residues 95 to 129 (MVESTPKSIKEGVSKEDAEEAKKSLEDAGGKASLK).

Belongs to the bacterial ribosomal protein bL12 family. In terms of assembly, homodimer. Part of the ribosomal stalk of the 50S ribosomal subunit. Forms a multimeric L10(L12)X complex, where L10 forms an elongated spine to which 2 to 4 L12 dimers bind in a sequential fashion. Binds GTP-bound translation factors.

Functionally, forms part of the ribosomal stalk which helps the ribosome interact with GTP-bound translation factors. Is thus essential for accurate translation. The sequence is that of Large ribosomal subunit protein bL12 from Acaryochloris marina (strain MBIC 11017).